We begin with the raw amino-acid sequence, 130 residues long: Protein NrdI (130 aa).

The protein belongs to the NrdI family.

Probably involved in ribonucleotide reductase function. In Bartonella bacilliformis (strain ATCC 35685 / KC583 / Herrer 020/F12,63), this protein is Protein NrdI.